The chain runs to 263 residues: Neurovirulence factor ICP34.5 (263 aa).

Basic residues predominate over residues 1–14 (MARRRRHRGPRRPR). A required for nucleolar localization region spans residues 1–16 (MARRRRHRGPRRPRPP). 2 disordered regions span residues 1–128 (MARR…PFRL) and 149–190 (RRAG…PATP). Polar residues predominate over residues 24-35 (TAQSQVTSTPNS). The segment covering 45–58 (AAPPPPPASGPPPS) has biased composition (pro residues). The segment covering 73–83 (ASDDDDDDDWP) has biased composition (acidic residues). Pro residues-rich tracts occupy residues 84–93 (DSPPPEPAPE) and 119–128 (SHPPSRPFRL). Residues 128 to 137 (LPPRLALRLR) carry the Nuclear export signal motif. 10 consecutive repeat copies span residues 161–163 (ATP), 164–166 (ATP), 167–169 (ATP), 170–172 (ATP), 173–175 (ATP), 176–178 (ATP), 179–181 (ATP), 182–184 (ATP), 185–187 (ATP), and 188–190 (ATP). Residues 161-190 (ATPATPATPATPATPATPATPATPATPATP) form a 10 X 3 AA tandem repeats of A-T-P region. Low complexity predominate over residues 164–190 (ATPATPATPATPATPATPATPATPATP). The segment at 190 to 203 (PARVRFSPHVRVRH) is interaction with host PPP1CA. The interval 205-263 (VVWASAARLARRGSWARERADRARFRRRVAEAEAVIGPCLGPEARARALARGAGPANSV) is important for interferon resistance. The short motif at 215-233 (RRGSWARERADRARFRRRV) is the Bipartite nuclear localization signal element. The tract at residues 233-248 (VAEAEAVIGPCLGPEA) is interaction with host EIF2S1/EIF-2ALPHA.

This sequence belongs to the PPP1R15 family. Interacts with host PPP1CA; this interaction to forms a high-molecular-weight complex that dephosphorylates EIF2S1/eIF-2alpha. Interacts with host EIF2S1/eIF-2alpha; this interaction is crucial for the specific dephosphorylation of EIF2S1/eIF-2alpha by PPP1CA. Binds to proliferating cell nuclear antigen (PCNA), which may release host cells from growth arrest and facilitate viral replication. Interacts (via N-terminus) with host C1QBP; this interaction allows C1QBP to be recruited to the inner nuclear membrane by ICP34.5. Interacts with host PRKCA. Interacts with protein UL31. Interacts with host STING/TMEM173; this interaction inhibits the intracellular DNA sensing pathway. Interacts with host BECN1; this interaction modulates host autophagy.

It is found in the host cytoplasm. The protein resides in the host nucleus. It localises to the host nucleolus. The protein localises to the virion. In terms of biological role, inhibits the establishment of the immune response and of the integrated stress response (ISR) in the infected cell. Plays essential roles in viral nuclear egress to mediate capsid transit across the nuclear membrane. Facilitates nuclear egress cooperatively with host C1QBP and protein kinase C/PKC to induce lamin A/C phosphorylation and subsequent reorganization. In turn, lamina disassembles and nuclear egress occurs. Recruits the serine/threonine protein phosphatase PPP1CA/PP1-alpha to dephosphorylate the translation initiation factor EIF2S1/eIF-2alpha, thereby couteracting the host shutoff of protein synthesis involving double-stranded RNA-dependent protein kinase EIF2AK2/PKR. In turn, controls host IRF3 activation and subsequently inhibits host interferon response. Controls the DNA sensing pathway by interacting with and inhibiting host STING/TMEM173. Also down-modulates the host MHC class II proteins cell surface expression. Acts as a neurovirulence factor that has a profound effect on the growth of the virus in central nervous system tissue, by interacting with host BECN1 and thereby antagonizing the host autophagy response. This chain is Neurovirulence factor ICP34.5 (RL1), found in Human herpesvirus 1 (strain F) (HHV-1).